The chain runs to 272 residues: 2-dehydro-3-deoxyphosphooctonate aldolase (272 aa).

It belongs to the KdsA family.

The protein localises to the cytoplasm. It carries out the reaction D-arabinose 5-phosphate + phosphoenolpyruvate + H2O = 3-deoxy-alpha-D-manno-2-octulosonate-8-phosphate + phosphate. It functions in the pathway carbohydrate biosynthesis; 3-deoxy-D-manno-octulosonate biosynthesis; 3-deoxy-D-manno-octulosonate from D-ribulose 5-phosphate: step 2/3. Its pathway is bacterial outer membrane biogenesis; lipopolysaccharide biosynthesis. The polypeptide is 2-dehydro-3-deoxyphosphooctonate aldolase (Geotalea uraniireducens (strain Rf4) (Geobacter uraniireducens)).